Reading from the N-terminus, the 291-residue chain is 3-methyl-2-oxobutanoate hydroxymethyltransferase (291 aa).

Residues 1–10 (MTQLSAAQTP) are compositionally biased toward polar residues. The segment at 1–20 (MTQLSAAQTPQPKPADGNRA) is disordered. Positions 71 and 110 each coordinate Mg(2+). Residues 71–72 (DS), D110, and K140 contribute to the 3-methyl-2-oxobutanoate site. Residue E142 participates in Mg(2+) binding. The active-site Proton acceptor is the E208.

The protein belongs to the PanB family. Homodecamer; pentamer of dimers. Requires Mg(2+) as cofactor.

The protein resides in the cytoplasm. It carries out the reaction 3-methyl-2-oxobutanoate + (6R)-5,10-methylene-5,6,7,8-tetrahydrofolate + H2O = 2-dehydropantoate + (6S)-5,6,7,8-tetrahydrofolate. The protein operates within cofactor biosynthesis; (R)-pantothenate biosynthesis; (R)-pantoate from 3-methyl-2-oxobutanoate: step 1/2. Functionally, catalyzes the reversible reaction in which hydroxymethyl group from 5,10-methylenetetrahydrofolate is transferred onto alpha-ketoisovalerate to form ketopantoate. This chain is 3-methyl-2-oxobutanoate hydroxymethyltransferase, found in Streptomyces coelicolor (strain ATCC BAA-471 / A3(2) / M145).